The sequence spans 315 residues: T cell receptor beta chain MC.7.G5 (315 aa).

Positions 1–21 (MTIRLLCYMGFYFLGAGLMEA) are cleaved as a signal peptide. The region spanning 22 to 114 (DIYQTPRYLV…TSQYLCASSE (93 aa)) is the Ig-like V-type domain. The interval 22-114 (DIYQTPRYLV…TSQYLCASSE (93 aa)) is t cell receptor beta variable 25-1. Cys-42 and Cys-110 are oxidised to a cystine. The segment at 46 to 50 (MGHDK) is CDR1. The interval 68–73 (SYGVNS) is CDR2. Asn-72 is a glycosylation site (N-linked (GlcNAc...) asparagine). The tract at residues 110 to 127 (CASSEARGLAEFTDTQYF) is CDR3. The t cell receptor beta joining 2-3 stretch occupies residues 122–136 (TDTQYFGPGTRLTVL). Residues 138 to 315 (DLKNVFPPEV…AMVKRKDSRG (178 aa)) are t cell receptor beta constant 2. The region spanning 145–254 (PEVAVFEPSE…WTQDRAKPVT (110 aa)) is the Ig-like C1-type domain. An intrachain disulfide couples Cys-167 to Cys-232. Asn-206 carries N-linked (GlcNAc...) asparagine glycosylation. The tract at residues 267 to 281 (CGFTSESYQQGVLSA) is connecting peptide. A helical membrane pass occupies residues 282–304 (TILYEILLGKATLYAVLVSALVL). The Cytoplasmic segment spans residues 305–315 (MAMVKRKDSRG).

As to quaternary structure, disulfide-linked heterodimer with TRAV38-2DV8*01J31*01C*01 alpha chain. The alpha-beta TR associates with the transmembrane signaling CD3 coreceptor proteins to form the TR-CD3 (TCR). The assembly of alpha-beta TR heterodimers with CD3 occurs in the endoplasmic reticulum where a single alpha-beta TR heterodimer associates with one CD3D-CD3E heterodimer, one CD3G-CD3E heterodimer and one CD247 homodimer forming a stable octameric structure. CD3D-CD3E and CD3G-CD3E heterodimers preferentially associate with TR alpha and TR beta chains (via TM domain), respectively. The association of the CD247 homodimer is the last step of TCR assembly in the endoplasmic reticulum and is required for transport to the cell surface. Expressed in MR1-restricted CD8-positive T cells.

The protein resides in the cell membrane. In terms of biological role, the beta chain of TRAV38-2DV8*01J31*01C*01/TRBV25-1*01J2S3*01C2*01 alpha-beta T cell receptor (TR) clonotype that displays pan-cancer cell recognition via the invariant MR1 molecule. On CD8-positive T cell clone MC.7.G5, likely recognizes tumor-specific or -associated metabolite(s) essential for cancer cell survival, triggering killing of many cancer cell types including lung, melanoma, leukemia, colon, breast, prostate, bone and ovarian cancer cells. Mediates cancer cell cytotoxicity in an HLA-independent manner. Has no reactivity to healthy cells even stressed or infected by bacteria. Antigen recognition initiates TR-CD3 clustering on the cell surface and intracellular activation of LCK that phosphorylates the ITAM motifs of CD3G, CD3D, CD3E and CD247 enabling the recruitment of ZAP70. In turn, ZAP70 phosphorylates LAT, which recruits numerous signaling molecules to form the LAT signalosome. The LAT signalosome propagates signal branching to three major signaling pathways, the calcium, the mitogen-activated protein kinase (MAPK) kinase and the nuclear factor NF-kappa-B (NF-kB) pathways, leading to the mobilization of transcription factors that are critical for gene expression and essential for T cell differentiation into effector/memory T cells. This Homo sapiens (Human) protein is T cell receptor beta chain MC.7.G5.